Here is a 3176-residue protein sequence, read N- to C-terminus: Large tegument protein deneddylase (3176 aa).

Residues 1-12 (MSNGDWGQSQRP) are compositionally biased toward polar residues. Residues 1–28 (MSNGDWGQSQRPRGTGPMRGIRTMDVNA) form a disordered region. Residues 1–268 (MSNGDWGQSQ…YEANGSGFDL (268 aa)) are deubiquitination activity. The 218-residue stretch at 41-258 (LGTASCNQAH…MLEHYGVYDF (218 aa)) folds into the Peptidase C76 domain. Active-site residues include Cys61, Asp193, and His195. Residues 319–342 (PAARYSPAKTNSPPPSPASAAPAS) form a disordered region. Tandem repeats lie at residues 335–339 (PASAA), 340–344 (PASAA), 345–349 (PASAA), 350–354 (PASAA), and 355–359 (PASAA). The segment at 335–384 (PASAAPASAAPASAAPASAAPASAAQASVAPASVAPASAAPASAAPDSAA) is 10 X 5 AA approximate repeats of P-A-S-A-A. A 6; approximate repeat occupies 360-364 (QASVA). Residues 365 to 369 (PASVA) form a 7; approximate repeat. 2 repeat units span residues 370 to 374 (PASAA) and 375 to 379 (PASAA). A compositionally biased stretch (low complexity) spans 376 to 386 (ASAAPDSAAPA). Disordered stretches follow at residues 376-683 (ASAA…GSGL), 928-950 (LLSG…SIYR), 1170-1193 (APIS…TPPL), 1435-1461 (LMET…RARE), 2610-3008 (GLVS…PGAR), and 3023-3043 (TYTV…KMPK). A 10; approximate repeat occupies 380-384 (PDSAA). The segment covering 457–488 (PRPPVPPHRPPSAARLPPPVIPIPHQSPPASP) has biased composition (pro residues). The segment covering 519-546 (AAPSNPEIPLTTPSPSPTAAAAPTATTL) has biased composition (low complexity). A compositionally biased stretch (pro residues) spans 579-636 (APSPLLPQQQPPPSAAPAPSPLLPQQQPPPSAARAPSPLPPQQQPLPSATPAPPPAQQ). The interval 581-611 (SPLLPQQQPPPSAAPAPSPLLPQQQPPPSAA) is interaction with inner tegument protein. The span at 1170–1182 (APISPASPSATPA) shows a compositional bias: low complexity. Residues 2619 to 2630 (SADNTPASSDRL) show a composition bias toward polar residues. Positions 2643 to 2654 (EGSTTAESEASG) are enriched in low complexity. The segment covering 2738-2747 (QPAPQQPPSS) has biased composition (pro residues). Composition is skewed to polar residues over residues 2761-2772 (SPHSTPSTASGS) and 2811-2831 (SAAS…SSQD). The segment covering 2839–2854 (MQREKKQQGGREEAAE) has biased composition (basic and acidic residues). 2 stretches are compositionally biased toward low complexity: residues 2872-2886 (APVV…ATPA) and 2901-2912 (APALGSGLAAPA).

Belongs to the herpesviridae large tegument protein family. Interacts with host CUL1 and CUL4A; these interactions inhibit the E3 ligase activity of cullins. Interacts with inner tegument protein. Interacts with capsid vertex specific component CVC2. Interacts with the major capsid protein/MCP. Interacts with host TRIM25 and YWHAZ.

The protein localises to the virion tegument. The protein resides in the host cytoplasm. It localises to the host nucleus. It carries out the reaction Thiol-dependent hydrolysis of ester, thioester, amide, peptide and isopeptide bonds formed by the C-terminal Gly of ubiquitin (a 76-residue protein attached to proteins as an intracellular targeting signal).. In terms of biological role, large tegument protein that plays multiple roles in the viral cycle. During viral entry, remains associated with the capsid while most of the tegument is detached and participates in the capsid transport toward the host nucleus. Plays a role in the routing of the capsid at the nuclear pore complex and subsequent uncoating. Within the host nucleus, acts as a deneddylase and promotes the degradation of nuclear CRLs (cullin-RING ubiquitin ligases) and thereby stabilizes nuclear CRL substrates, while cytoplasmic CRLs remain unaffected. These modifications prevent host cell cycle S-phase progression and create a favorable environment allowing efficient viral genome replication. Participates later in the secondary envelopment of capsids. Indeed, plays a linker role for the association of the outer viral tegument to the capsids together with the inner tegument protein. Counteracts host TLR-mediated NF-kappa-B activation through both MYD88 and TICAM1-dependent pathways by interfering with 'Lys-63'- and 'Lys-48'-linked ubiquitination of signaling intermediates such as TRAF6 and IKBKG. Inhibits type I interferon production by forming a tri-molecular complex with host TRIM25 and 14-3-3 thereby promoting TRIM25 autoubiquitination and sequestration of the ligase into inactive protein aggregates. In turn, host RIGI is recruited to the complex but ubiquitination is severely impaired leading to inhibition of the pathway. Also catalyzes the removal of 'Lys-48'- and 'Lys-63'-linked ubiquitin chains on host TBK1 and STING1 suppressing cGAS-STING signaling in addition to the RIGI-MAVS pathway. Inhibits selective autophagy by deubiquitinating host SQSTM1. In turn, decreased SQSTM1 ubiquitination fails to recruit LC3 to SQSTM1-positive aggregates. In the host nucleus, deubiquitinates topoisomerase II subunits TOP2A and TOP2B thereby stabilizing SUMOylated TOP2 which halts the DNA damage response to TOP2-induced double strand DNA breaks and promotes cell survival. This Homo sapiens (Human) protein is Large tegument protein deneddylase.